Consider the following 360-residue polypeptide: Vignain (360 aa).

An N-terminal signal peptide occupies residues 1–20 (MQKFILLALSLALVLAITES). The propeptide at 21-124 (FDFHEKELES…NGTFMYEKVD (104 aa)) is activation peptide. A glycan (N-linked (GlcNAc...) asparagine) is linked at Asn-115. 3 disulfides stabilise this stretch: Cys-147–Cys-189, Cys-181–Cys-222, and Cys-280–Cys-332. Cys-150 is an active-site residue. Catalysis depends on residues His-286 and Asn-307. Residues 341 to 360 (PIKKSSNNPSGIKSSPKDEL) form a disordered region. Polar residues predominate over residues 344-353 (KSSNNPSGIK). Positions 354 to 360 (SSPKDEL) are cleaved as a propeptide — removed in mature form. The tract at residues 357–360 (KDEL) is prevents secretion from ER.

It belongs to the peptidase C1 family. In terms of processing, the potential N-glycosylation site at Asn-115 is not glycosylated.

It localises to the cytoplasmic vesicle. Its activity is regulated as follows. Low pH triggers activation of the protease and removal of the propeptide and the KDEL motif. Involved in programmed cell death. Shows a pronounced preference for hydrophobic residues in the P2 position and no obvious preference in the P1 position of the cleavage site. Accepts proline at the P1 and P1' positions. In Ricinus communis (Castor bean), this protein is Vignain (CYSEP).